A 463-amino-acid chain; its full sequence is Chromosomal replication initiator protein DnaA (463 aa).

A domain I, interacts with DnaA modulators region spans residues M1–T83. The domain II stretch occupies residues T83–S124. Positions T125–S343 are domain III, AAA+ region. Positions 171, 173, 174, and 175 each coordinate ATP. The domain IV, binds dsDNA stretch occupies residues N344 to N463.

Belongs to the DnaA family. In terms of assembly, oligomerizes as a right-handed, spiral filament on DNA at oriC.

It localises to the cytoplasm. Plays an essential role in the initiation and regulation of chromosomal replication. ATP-DnaA binds to the origin of replication (oriC) to initiate formation of the DNA replication initiation complex once per cell cycle. Binds the DnaA box (a 9 base pair repeat at the origin) and separates the double-stranded (ds)DNA. Forms a right-handed helical filament on oriC DNA; dsDNA binds to the exterior of the filament while single-stranded (ss)DNA is stabiized in the filament's interior. The ATP-DnaA-oriC complex binds and stabilizes one strand of the AT-rich DNA unwinding element (DUE), permitting loading of DNA polymerase. After initiation quickly degrades to an ADP-DnaA complex that is not apt for DNA replication. Binds acidic phospholipids. In Rickettsia conorii (strain ATCC VR-613 / Malish 7), this protein is Chromosomal replication initiator protein DnaA.